Here is an 82-residue protein sequence, read N- to C-terminus: Conotoxin Cal30 (82 aa).

The signal sequence occupies residues 1-19; the sequence is MEKLIILLLVASLLVTTDS.

May contain 5 disulfide bonds. In terms of tissue distribution, expressed by the venom duct.

It localises to the secreted. Functionally, probable neurotoxin. This chain is Conotoxin Cal30, found in Californiconus californicus (California cone).